The primary structure comprises 375 residues: Membrane progesterone receptor epsilon (375 aa).

The tract at residues 1 to 39 (MPRRLQQRGAGVKGPPASTSRRSHPASASAPRSPPAATT) is disordered. At 1–84 (MPRRLQQRGA…VLKPTNETLN (84 aa)) the chain is on the cytoplasmic side. A compositionally biased stretch (low complexity) spans 15 to 39 (PPASTSRRSHPASASAPRSPPAATT). A helical membrane pass occupies residues 85 to 105 (FWTHFIPLLLFLSKFCRLFFL). The Extracellular portion of the chain corresponds to 106–114 (GGSDVPFHH). A helical transmembrane segment spans residues 115–135 (PWLLPLWCYASGVLLTFAMSC). At 136–160 (TAHVFSCLSLRLRAAFFYLDYASIS) the chain is on the cytoplasmic side. The helical transmembrane segment at 161–181 (YYGFGSTVAYYYYLLPSLSLL) threads the bilayer. Topologically, residues 182–203 (DARVMTPYVQQRLGWHVDCTRL) are extracellular. Residues 204–224 (IAVYRALVLPVAFVLAVACTV) traverse the membrane as a helical segment. Over 225 to 241 (ACCKSRTDWCSYPFALR) the chain is Cytoplasmic. The helical transmembrane segment at 242–262 (TFVFVMPLSMACPIMLESWLF) threads the bilayer. Topologically, residues 263–299 (DLRGENPTLFVHFYRRYFWLVVAAFFNVSKIPERIQP) are extracellular. A helical transmembrane segment spans residues 300-320 (GLFDIIGHSHQLFHIFTFLSI). Over 321–341 (YDQVYYVEEGLRQFLQAPPAA) the chain is Cytoplasmic. Residues 342-362 (PTFSGTVGYMLLLVVCLGLVI) traverse the membrane as a helical segment. The Extracellular portion of the chain corresponds to 363 to 375 (RKFLNSTEFCSKK).

It belongs to the ADIPOR family. In terms of assembly, homodimer.

It is found in the cell membrane. In terms of biological role, plasma membrane progesterone (P4) receptor coupled to G proteins. Seems to act through a G(s) mediated pathway. May be involved in regulating rapid P4 signaling in the nervous system. Also binds dehydroepiandrosterone (DHEA), pregnanolone, pregnenolone and allopregnanolone. In Mus musculus (Mouse), this protein is Membrane progesterone receptor epsilon.